Reading from the N-terminus, the 582-residue chain is Isopropyl malate synthase AMT7 (582 aa).

In terms of domain architecture, Pyruvate carboxyltransferase spans 61-341 (PVLFSTDLRD…EPGIDLSRLD (281 aa)).

It belongs to the alpha-IPM synthase/homocitrate synthase family. LeuA type 2 subfamily.

It carries out the reaction 3-methyl-2-oxobutanoate + acetyl-CoA + H2O = (2S)-2-isopropylmalate + CoA + H(+). It participates in mycotoxin biosynthesis. Its function is as follows. Isopropyl malate synthase; part of the gene clusters that mediate the biosynthesis of AM-toxins, host-selective toxins (HSTs) causing Alternaria blotch on apple, a worldwide distributed disease. AM-toxins are cyclic depsipeptides containing the 3 residues 2-hydroxy-isovaleric acid (2-HIV), dehydroalanine, L-alanine which are common for all 3 AM-toxins I to III. The fourth precursor is L-alpha-amino-methoxyphenyl-valeric acid (L-Amv) for AM-toxin I, L-alpha-amino-phenyl-valeric acid (L-Apv) for AM-toxin II, and L-alpha-amino-hydroxyphenyl-valeric acid (L-Ahv) for AM-toxin III. AM-toxins have two target sites for affecting susceptible apple cells; they cause invagination of the plasma membrane and electrolyte loss and chloroplast disorganization. The non-ribosomal peptide synthetase AMT1 contains 4 catalytic modules and is responsible for activation of each residue in AM-toxin. The aldo-keto reductase AMT2 catalyzes the conversion of 2-keto-isovaleric acid (2-KIV) to 2-hydroxy-isovaleric acid (2-HIV), one of the precursor residues incorporated by AMT1 during AM-toxin biosynthesis, by reduction of its ketone to an alcohol. The cytochrome P450 monooxygenase AMT3 and the thioesterase AMT4 are also important for AM-toxin production, but their exact function within the AM-toxin biosynthesis are not known yet. Up to 21 proteins (including AMT1 to AMT4) are predicted to be involved in AM-toxin biosynthesis since their expression ishighly up-regulated in AM-toxin-producing cultures. The protein is Isopropyl malate synthase AMT7 of Alternaria alternata (Alternaria rot fungus).